A 164-amino-acid chain; its full sequence is Cyclic pyranopterin monophosphate synthase (164 aa).

Residues 75–77 (MCH) and 116–117 (ME) contribute to the substrate site. Residue Asp-131 is part of the active site.

This sequence belongs to the MoaC family. Homohexamer; trimer of dimers.

It carries out the reaction (8S)-3',8-cyclo-7,8-dihydroguanosine 5'-triphosphate = cyclic pyranopterin phosphate + diphosphate. Its pathway is cofactor biosynthesis; molybdopterin biosynthesis. Functionally, catalyzes the conversion of (8S)-3',8-cyclo-7,8-dihydroguanosine 5'-triphosphate to cyclic pyranopterin monophosphate (cPMP). The chain is Cyclic pyranopterin monophosphate synthase from Staphylococcus aureus (strain Mu3 / ATCC 700698).